The primary structure comprises 284 residues: Tropomyosin (284 aa).

Positions 1–273 (MDAIKKKMVA…KEKYKAISDE (273 aa)) form a coiled coil. Over residues 110 to 130 (SGKLEEASKAADESERNRKVL) the composition is skewed to basic and acidic residues. A disordered region spans residues 110-134 (SGKLEEASKAADESERNRKVLENLN).

It belongs to the tropomyosin family. As to quaternary structure, homodimer.

Functionally, tropomyosin, in association with the troponin complex, plays a central role in the calcium dependent regulation of muscle contraction. This is Tropomyosin from Perna viridis (Asian green mussel).